The following is a 380-amino-acid chain: MMFSGFNADYEASSSRCSSASPAGDSLSYYHSPADSFSSMGSPVNTQDFCADLSVSSANFIPTVTAISTSPDLQWLVQPTLVSSVAPSQTRAPHPYGLPTQSAGAYARAGMVKTVSGGRAQSIGRRGKVEQLSPEEEEKRRIRRERNKMAAAKCRNRRRELTDTLQAETDQLEDEKSALQTEIANLLKEKEKLEFILAAHRPACKIPDDLGFPEEMSVASLDLTGGLPEASTPESEEAFTLPLLNDPEPKPSLEPVKSISNVELKAEPFDDFLFPASSRPSGSETSRSVPDVDLSGSFYAADWEPLHSNSLGMGPMVTELEPLCTPVVTCTPGCTTYTSSFVFTYPEADSFPSCAAAHRKGSSSNEPSSDSLSSPTLLAL.

Tyr-10 and Tyr-30 each carry phosphotyrosine; by SRC. Residues Lys-113 and Lys-128 each participate in a glycyl lysine isopeptide (Lys-Gly) (interchain with G-Cter in SUMO2) cross-link. The tract at residues 117 to 141 (GGRAQSIGRRGKVEQLSPEEEEKRR) is disordered. The bZIP domain maps to 137–200 (EEKRRIRRER…EKLEFILAAH (64 aa)). The basic motif; required for the activation of phospholipid synthesis, but not for CDS1-binding stretch occupies residues 139 to 159 (KRRIRRERNKMAAAKCRNRRR). A leucine-zipper region spans residues 165–193 (LQAETDQLEDEKSALQTEIANLLKEKEKL). Thr-232 is subject to Phosphothreonine. Residue Lys-265 forms a Glycyl lysine isopeptide (Lys-Gly) (interchain with G-Cter in SUMO); alternate linkage. Lys-265 is covalently cross-linked (Glycyl lysine isopeptide (Lys-Gly) (interchain with G-Cter in SUMO2); alternate). Phosphothreonine; by MAPK1 and MAPK3 is present on residues Thr-325 and Thr-331. Positions 354–380 (CAAAHRKGSSSNEPSSDSLSSPTLLAL) are disordered. Phosphoserine; by MAPK1, MAPK3 and RPS6KA3 is present on Ser-362. A compositionally biased stretch (low complexity) spans 362–374 (SSSNEPSSDSLSS). Ser-374 is subject to Phosphoserine; by MAPK1 and MAPK3.

This sequence belongs to the bZIP family. Fos subfamily. Heterodimer; with JUN. Component of the SMAD3/SMAD4/JUN/FOS complex required for synergistic TGF-beta-mediated transcription at the AP1 promoter site. Interacts with SMAD3; the interaction is weak even on TGF-beta activation. Interacts with MAFB. Interacts with TSC22D3 (via N-terminus); this interaction inhibits the binding of active AP1 to its target DNA. Interacts with CDS1 and PI4K2A, but not with CDIPT, nor PI4K2B. Interacts (via bZIP domain and leucine-zipper region) with the multiprotein chromatin-remodeling complexes SWI/SNF: SWI/SNF-A (BAF) subunits SMARCB1, SMARCC2 and SMARCD1. Interacts (via bZIP domain and leucine-zipper region) with ARID1A. Post-translationally, phosphorylated in the C-terminal upon stimulation by nerve growth factor (NGF) and epidermal growth factor (EGF). Phosphorylated, in vitro, by MAPK and RSK1. Phosphorylation on both Ser-362 and Ser-374 by MAPK1/2 and RSK1/2 leads to protein stabilization with phosphorylation on Ser-374 being the major site for protein stabilization on NGF stimulation. Phosphorylation on Ser-362 and Ser-374 primes further phosphorylations on Thr-325 and Thr-331 through promoting docking of MAPK to the DEF domain. Phosphorylation on Thr-232, induced by HA-RAS, activates the transcriptional activity and antagonizes sumoylation. Phosphorylation on Ser-362 by RSK2 in osteoblasts contributes to osteoblast transformation. In terms of processing, constitutively sumoylated with SUMO1, SUMO2 and SUMO3. Desumoylated by SENP2. Sumoylation requires heterodimerization with JUN and is enhanced by mitogen stimulation. Sumoylation inhibits the AP-1 transcriptional activity and is, itself, inhibited by Ras-activated phosphorylation on Thr-232. In quiescent cells, the small amount of FOS present is phosphorylated at Tyr-10 and Tyr-30 by SRC. This Tyr-phosphorylated form is cytosolic. In growing cells, dephosphorylated by PTPN2. Dephosphorylation leads to the association with endoplasmic reticulum membranes and activation of phospholipid synthesis.

It is found in the nucleus. The protein localises to the endoplasmic reticulum. The protein resides in the cytoplasm. Its subcellular location is the cytosol. Its function is as follows. Nuclear phosphoprotein which forms a tight but non-covalently linked complex with the JUN/AP-1 transcription factor. On TGF-beta activation, forms a multimeric SMAD3/SMAD4/JUN/FOS complex, at the AP1/SMAD-binding site to regulate TGF-beta-mediated signaling. Has a critical function in regulating the development of cells destined to form and maintain the skeleton. It is thought to have an important role in signal transduction, cell proliferation and differentiation. In growing cells, activates phospholipid synthesis, possibly by activating CDS1 and PI4K2A. This activity requires Tyr-dephosphorylation and association with the endoplasmic reticulum. This is Protein c-Fos (Fos) from Mus musculus (Mouse).